The sequence spans 513 residues: Calcium-dependent protein kinase 24 (513 aa).

Positions 1-33 (MQPDPSGSGGDGNANAKAKLAPPPVTAAGGRPV) are disordered. A Protein kinase domain is found at 47 to 305 (YRIGKKLGQG…AHEVLCHPWI (259 aa)). Residues 53 to 61 (LGQGQFGTT) and K76 each bind ATP. The active-site Proton acceptor is the D171. The autoinhibitory domain stretch occupies residues 311–341 (APDKPIDSAVLSRLKHFSAMNKLKKMALRVI). EF-hand domains follow at residues 348–383 (EEIG…VGSE), 384–419 (LTEH…MNKL), 420–455 (EREE…FGLD), and 458–489 (HLED…GNAG). The Ca(2+) site is built by D361, D363, S365, T367, E372, D397, D399, S401, T403, E408, D433, D435, S437, E444, D467, N469, D471, Q473, and E478.

It belongs to the protein kinase superfamily. Ser/Thr protein kinase family. CDPK subfamily. Expressed in roots.

The protein localises to the cytoplasm. It carries out the reaction L-seryl-[protein] + ATP = O-phospho-L-seryl-[protein] + ADP + H(+). The catalysed reaction is L-threonyl-[protein] + ATP = O-phospho-L-threonyl-[protein] + ADP + H(+). Activated by calcium. Autophosphorylation may play an important role in the regulation of the kinase activity. Its function is as follows. May play a role in signal transduction pathways that involve calcium as a second messenger. Possesses calcium-dependent protein kinase activity in vitro. The sequence is that of Calcium-dependent protein kinase 24 from Oryza sativa subsp. japonica (Rice).